The primary structure comprises 146 residues: Cyanate hydratase (146 aa).

Active-site residues include Arg87, Glu90, and Ser113.

This sequence belongs to the cyanase family.

The enzyme catalyses cyanate + hydrogencarbonate + 3 H(+) = NH4(+) + 2 CO2. In terms of biological role, catalyzes the reaction of cyanate with bicarbonate to produce ammonia and carbon dioxide. This Nostoc sp. (strain PCC 7120 / SAG 25.82 / UTEX 2576) protein is Cyanate hydratase.